The primary structure comprises 428 residues: Sorting nexin-31 (428 aa).

The PX domain occupies 1 to 107; the sequence is MHICIPVTEE…EYFKKLQMDT (107 aa).

It belongs to the sorting nexin family.

In terms of biological role, may be involved in protein trafficking. In Xenopus tropicalis (Western clawed frog), this protein is Sorting nexin-31 (snx31).